Consider the following 428-residue polypeptide: C4-dicarboxylate transport protein (428 aa).

Helical transmembrane passes span 8–28 (SLYF…HFYP), 44–64 (LIKM…IAGM), 76–96 (VALL…LIIV), 142–162 (IGAF…LFGF), 184–204 (VIFG…FGAM), 222–242 (LIIC…GSIA), 326–346 (IVHQ…AAGV), and 352–372 (IVLA…LALI).

This sequence belongs to the dicarboxylate/amino acid:cation symporter (DAACS) (TC 2.A.23) family.

It localises to the cell inner membrane. In terms of biological role, responsible for the transport of dicarboxylates such as succinate, fumarate, and malate from the periplasm across the membrane. The chain is C4-dicarboxylate transport protein from Escherichia coli O127:H6 (strain E2348/69 / EPEC).